The chain runs to 217 residues: Small ribosomal subunit protein uS3 (217 aa).

Positions 40–110 constitute a KH type-2 domain; sequence IRDLINKWFN…EVYINIHEVR (71 aa).

This sequence belongs to the universal ribosomal protein uS3 family. Part of the 30S ribosomal subunit. Forms a tight complex with proteins S10 and S14.

Functionally, binds the lower part of the 30S subunit head. Binds mRNA in the 70S ribosome, positioning it for translation. This chain is Small ribosomal subunit protein uS3, found in Rickettsia typhi (strain ATCC VR-144 / Wilmington).